The following is a 124-amino-acid chain: Ragulator complex protein LAMTOR3 (124 aa).

Residues Thr-57–Ser-70 are required for interaction with LAMTOR2.

This sequence belongs to the LAMTOR3 family. Part of the Ragulator complex composed of LAMTOR1, LAMTOR2, LAMTOR3, LAMTOR4 and LAMTOR5. LAMTOR4 and LAMTOR5 form a heterodimer that interacts, through LAMTOR1, with a LAMTOR2, LAMTOR3 heterodimer. Interacts with LAMTOR1 and LAMTOR2; the interaction is direct. The Ragulator complex interacts with both the mTORC1 complex and heterodimers constituted of the Rag GTPases RagA/RRAGA, RagB/RRAGB, RagC/RRAGC and RagD/RRAGD; regulated by amino acid availability. The Ragulator complex interacts with SLC38A9; the probable amino acid sensor. Component of the lysosomal folliculin complex (LFC), composed of FLCN, FNIP1 (or FNIP2), RagA/RRAGA or RagB/RRAGB GDP-bound, RagC/RRAGC or RagD/RRAGD GTP-bound, and Ragulator. Interacts with MAP2K1/MEK1 and MAPK2. Interacts with MORG1.

The protein localises to the late endosome membrane. As part of the Ragulator complex it is involved in amino acid sensing and activation of mTORC1, a signaling complex promoting cell growth in response to growth factors, energy levels, and amino acids. Activated by amino acids through a mechanism involving the lysosomal V-ATPase, the Ragulator plays a dual role for the small GTPases Rag (RagA/RRAGA, RagB/RRAGB, RagC/RRAGC and/or RagD/RRAGD): it (1) acts as a guanine nucleotide exchange factor (GEF), activating the small GTPases Rag and (2) mediates recruitment of Rag GTPases to the lysosome membrane. Activated Ragulator and Rag GTPases function as a scaffold recruiting mTORC1 to lysosomes where it is in turn activated. Adapter protein that enhances the efficiency of the MAP kinase cascade facilitating the activation of MAPK2. The protein is Ragulator complex protein LAMTOR3 of Homo sapiens (Human).